The sequence spans 463 residues: MSTGTVVQVIGAVVDVEFPQDAVPQVYDALKITGEGSCNGLVLEVQQQLGGGVVRTIAMGTSDGLRRGLEVVNSGSPISVPVGTATLGRIMNVLGEPIDEAGAIGEEERYVIHRSAPSYEDQSNTTELLETGIKVIDLVCPFAKGGKVGLFGGAGVGKTVNMMELINNIAKAHSGLSVFAGVGERTREGNDFYYEMKDSGVLDKVAMVYGQMNEPPGNRLRVALTGLTMAEKFRDEGRDVLLFVDNIYRYTLAGTEVSALLGRMPSAVGYQPTLAEEMGVLQERITSTKTGSITSVQAVYVPADDLTDPSPATTFAHLDATVVLSRQIASLGIYPAVDPLDSTSRQLDPLVVGQEHYDVANGVQTVLQRYKELKDIIAILGMDELSDDDKMTVSRARKIERFLSQPFHVAEVFTGSPGKYVSLKDTIRGFKGILSGEFDHIPEQAFYMVGSIDEAVEKANKKK.

Residue glycine 152 to threonine 159 participates in ATP binding.

This sequence belongs to the ATPase alpha/beta chains family. F-type ATPases have 2 components, CF(1) - the catalytic core - and CF(0) - the membrane proton channel. CF(1) has five subunits: alpha(3), beta(3), gamma(1), delta(1), epsilon(1). CF(0) has three main subunits: a(1), b(2) and c(9-12). The alpha and beta chains form an alternating ring which encloses part of the gamma chain. CF(1) is attached to CF(0) by a central stalk formed by the gamma and epsilon chains, while a peripheral stalk is formed by the delta and b chains.

The protein resides in the cell inner membrane. The enzyme catalyses ATP + H2O + 4 H(+)(in) = ADP + phosphate + 5 H(+)(out). Produces ATP from ADP in the presence of a proton gradient across the membrane. The catalytic sites are hosted primarily by the beta subunits. This Shewanella sp. (strain MR-7) protein is ATP synthase subunit beta.